The following is a 416-amino-acid chain: Trifolitoxin-processing protein TfxD (416 aa).

11 consecutive transmembrane segments (helical) span residues 24 to 44, 48 to 68, 79 to 99, 114 to 134, 153 to 173, 176 to 196, 230 to 250, 255 to 275, 295 to 315, 322 to 342, and 372 to 392; these read MIPN…ALQV, VLIT…LICM, VFAA…ALIA, IAFI…AYCA, SSLI…FAGT, SIIS…LAYA, ASFI…VVAA, IAVF…LAIG, VLIA…VGLI, IFAL…CDGL, and VILA…ALVL.

Its subcellular location is the cell membrane. Its function is as follows. The actions of the proteins TfxB, TfxD and TfxF are implicated in the processing of the inactive trifolitoxin (TfxA) precursor into the active peptide. The protein is Trifolitoxin-processing protein TfxD (tfxD) of Rhizobium leguminosarum bv. trifolii.